The sequence spans 163 residues: 2-C-methyl-D-erythritol 2,4-cyclodiphosphate synthase (163 aa).

Asp-8 and His-10 together coordinate a divalent metal cation. 4-CDP-2-C-methyl-D-erythritol 2-phosphate contacts are provided by residues 8 to 10 (DVH) and 34 to 35 (HS). His-42 contacts a divalent metal cation. 4-CDP-2-C-methyl-D-erythritol 2-phosphate contacts are provided by residues 56–58 (DIG), 132–135 (TTTE), Phe-139, and Arg-142.

This sequence belongs to the IspF family. In terms of assembly, homotrimer. Requires a divalent metal cation as cofactor.

It carries out the reaction 4-CDP-2-C-methyl-D-erythritol 2-phosphate = 2-C-methyl-D-erythritol 2,4-cyclic diphosphate + CMP. Its pathway is isoprenoid biosynthesis; isopentenyl diphosphate biosynthesis via DXP pathway; isopentenyl diphosphate from 1-deoxy-D-xylulose 5-phosphate: step 4/6. Functionally, involved in the biosynthesis of isopentenyl diphosphate (IPP) and dimethylallyl diphosphate (DMAPP), two major building blocks of isoprenoid compounds. Catalyzes the conversion of 4-diphosphocytidyl-2-C-methyl-D-erythritol 2-phosphate (CDP-ME2P) to 2-C-methyl-D-erythritol 2,4-cyclodiphosphate (ME-CPP) with a corresponding release of cytidine 5-monophosphate (CMP). This chain is 2-C-methyl-D-erythritol 2,4-cyclodiphosphate synthase, found in Moorella thermoacetica (strain ATCC 39073 / JCM 9320).